Here is a 134-residue protein sequence, read N- to C-terminus: Small ribosomal subunit protein uS9 (134 aa).

Residues 114–134 (EVERKKYGLKKARRAPQFSKR) are disordered. Over residues 120 to 134 (YGLKKARRAPQFSKR) the composition is skewed to basic residues.

Belongs to the universal ribosomal protein uS9 family.

This is Small ribosomal subunit protein uS9 from Thermotoga sp. (strain RQ2).